Consider the following 442-residue polypeptide: Betaine reductase complex component B subunit alpha (442 aa).

As to quaternary structure, heterotetramer of two alpha and two beta subunits. Component of the betaine reductase complex, together with components A and C. PB is substrate specific.

It carries out the reaction acetyl phosphate + trimethylamine + [thioredoxin]-disulfide + H2O = glycine betaine + [thioredoxin]-dithiol + phosphate + H(+). In terms of biological role, in the first step of betaine reductase, the substrate is bound to component PB via a Schiff base intermediate. Then the PB-activated substrate is nucleophilically attacked by the selenol anion of component PA to transform it to a carboxymethylated selenoether and the respective amine. By action of component PC, acetyl phosphate is formed, leaving component PA in its oxidized state. Finally component PA becomes reduced by the thioredoxin system to start a new catalytic cycle of reductive deamination. This Peptoclostridium acidaminophilum (Eubacterium acidaminophilum) protein is Betaine reductase complex component B subunit alpha (grdI).